We begin with the raw amino-acid sequence, 344 residues long: MNHAITMGIFWHLIGAASAACFYAPFKKVKHWSWETMWSVGGTVSWLILPWTISAILLPDFWAYFTSFNASTLLPVFLFGAMWGIGNINYGLTMRYLGMSMGIGIAIGITLIVGTLMTPILNGNFDVLINTHGGRMTLLGVLVAVIGVGIVTRAGQLKERKMGITAEDFNLRKGLVLAVMCGIFSAGMSFAMNAAKPMHEAAAALGVDPLYVALPSYVVIMGGGALVNLGFCFIRLAKVKNLSVKADFSLAKPLIVTNVLLSALGGLMWYLQFFFYAWGHASIPSQYDYMSWMLHMSFYVLCGGMVGLVLKEWNNAGRRPVGVLSLGCVVIIIAANIVGLGMAS.

Helical transmembrane passes span 4-24 (AITM…CFYA), 38-58 (WSVG…AILL), 72-92 (TLLP…NYGL), 101-121 (MGIG…TPIL), 137-157 (TLLG…AGQL), 175-195 (LVLA…MNAA), 214-234 (LPSY…FCFI), 259-279 (VLLS…YAWG), 290-310 (MSWM…GLVL), and 321-341 (VGVL…VGLG).

It belongs to the L-rhamnose transporter (TC 2.A.7.6) family.

Its subcellular location is the cell inner membrane. It catalyses the reaction L-rhamnopyranose(in) + H(+)(in) = L-rhamnopyranose(out) + H(+)(out). In terms of biological role, uptake of L-rhamnose across the cytoplasmic membrane with the concomitant transport of protons into the cell (symport system). This chain is L-rhamnose-proton symporter, found in Enterobacter sp. (strain 638).